A 186-amino-acid polypeptide reads, in one-letter code: Periplasmic nitrate reductase, electron transfer subunit (186 aa).

An N-terminal signal peptide occupies residues 1 to 20; the sequence is MKTSKLNFLTLVASTGLALA. His-87, Cys-102, Cys-105, His-106, His-123, Cys-144, Cys-147, and His-148 together coordinate heme c.

This sequence belongs to the NapB family. As to quaternary structure, component of the periplasmic nitrate reductase NapAB complex composed of NapA and NapB. Binds 2 heme C groups per subunit.

The protein localises to the periplasm. In terms of biological role, electron transfer subunit of the periplasmic nitrate reductase complex NapAB. Transfers electrons to NapA subunit, thus allowing electron flow between membrane and periplasm. Essential for periplasmic nitrate reduction with nitrate as the terminal electron acceptor. The chain is Periplasmic nitrate reductase, electron transfer subunit from Wolinella succinogenes (strain ATCC 29543 / DSM 1740 / CCUG 13145 / JCM 31913 / LMG 7466 / NCTC 11488 / FDC 602W) (Vibrio succinogenes).